Here is a 72-residue protein sequence, read N- to C-terminus: UPF0270 protein PM1156 (72 aa).

Belongs to the UPF0270 family.

The polypeptide is UPF0270 protein PM1156 (Pasteurella multocida (strain Pm70)).